The primary structure comprises 1501 residues: Pleiotropic ABC efflux transporter of multiple drugs CDR1 (1501 aa).

Residues 1 to 30 (MSDSKMSSQDESKLEKAISQDSSSENHSIN) are disordered. The Cytoplasmic segment spans residues 1-513 (MSDSKMSSQD…NFLRMKGDPS (513 aa)). The segment at 2-512 (SDSKMSSQDE…RNFLRMKGDP (511 aa)) is NBD1. Basic and acidic residues predominate over residues 8-18 (SQDESKLEKAI). One can recognise an ABC transporter 1 domain in the interval 150–404 (LATEGFRHFQ…FEKMGWKCPQ (255 aa)). The helical transmembrane segment at 514 to 534 (IPIFSVFGQLVMGLILSSVFY) threads the bilayer. Over 535–548 (NLSQTTGSFYYRGA) the chain is Extracellular. A helical transmembrane segment spans residues 549-569 (AMFFAVLFNAFSSLLEIMSLF). Over 570 to 597 (EARPIVEKHKKYALYRPSADALASIISE) the chain is Cytoplasmic. Residues 598–618 (LPVKLAMSMSFNFVFYFMVNF) traverse the membrane as a helical segment. Residues 619 to 622 (RRNP) are Extracellular-facing. The chain crosses the membrane as a helical span at residues 623–643 (GRFFFYWLMCIWCTFVMSHLF). The Cytoplasmic segment spans residues 644–654 (RSIGAVSTSIS). The chain crosses the membrane as a helical span at residues 655–675 (GAMTPATVLLLAMVIYTGFVI). At 676-764 (PTPSMLGWSR…QYYNSHKWRN (89 aa)) the chain is on the extracellular side. The helical transmembrane segment at 765 to 785 (LGITIGFAVFFLAIYIALTEF) threads the bilayer. The Cytoplasmic segment spans residues 786–1195 (NKGAMQKGEI…TIVQDWRSPG (410 aa)). Residues 786–1195 (NKGAMQKGEI…TIVQDWRSPG (410 aa)) are NBD2. An ABC transporter 2 domain is found at 859–1103 (FFWRDLTYQV…MINYFEKYGA (245 aa)). 895–902 (GASGAGKT) is a binding site for ATP. The stretch at 1137–1164 (RNSSEYQAVREEINRMEAELSKLPRDND) forms a coiled coil. A helical membrane pass occupies residues 1196–1216 (YIYSKIFLVVSAALFNGFSFF). Residues 1217–1229 (KAKNNMQGLQNQM) lie on the Extracellular side of the membrane. The chain crosses the membrane as a helical span at residues 1230 to 1250 (FSVFMFFIPFNTLVQQMLPYF). Residues 1251–1280 (VKQRDVYEVREAPSRTFSWFAFIAGQITSE) are Cytoplasmic-facing. The helical transmembrane segment at 1281–1301 (IPYQVAVGTIAFFCWYYPLGL) threads the bilayer. Topologically, residues 1302–1314 (YNNATPTDSVNPR) are extracellular. Residues 1315-1335 (GVLMWMLVTAFYVYTATMGQL) form a helical membrane-spanning segment. Over 1336–1355 (CMSFSELADNAANLATLLFT) the chain is Cytoplasmic. Residues 1356-1376 (MCLNFCGVLAGPDVLPGFWIF) traverse the membrane as a helical segment. Topologically, residues 1377 to 1466 (MYRCNPFTYL…NSLYSERWRN (90 aa)) are extracellular. Residues 1467–1487 (FGIFIAFIAINIILTVIFYWL) form a helical membrane-spanning segment. At 1488-1501 (ARVPKGNREKKNKK) the chain is on the cytoplasmic side.

The protein belongs to the ABC transporter superfamily.

Its subcellular location is the cell membrane. With respect to regulation, disulfiram reverses CDR1-mediated drug resistance by interaction with both ATP and substrate-binding sites of the transporter and may be useful for antifungal therapy. Functionally, pleiotropic ABC efflux transporter that confers resistance to numerous chemicals including anisomycin, cycloheximide, fluconazole, miconazole, ketoconazole, itriconazole, nystatin, terbinafine, amorolfine, brefeldin A, amphotericin B, fluphenazine, as well as estrogen. Plays a role in farnesol-induced apoptotic process through glutathione efflux activity. Mediates in-to-out translocation of membrane phospholipids including aminophospholipids and thus regulates asymmetric distribution of phosphatidylethanolamine. Exhibits nucleoside triphosphatase activity. This Candida albicans (strain SC5314 / ATCC MYA-2876) (Yeast) protein is Pleiotropic ABC efflux transporter of multiple drugs CDR1 (CDR1).